The chain runs to 486 residues: Ribosome biogenesis protein YTM1 (486 aa).

The interval 12–99 (RQLPINLFTR…ESQIDVEYVR (88 aa)) is ubiquitin-like (UBL) domain. 5 WD repeats span residues 212-251 (GHTG…PTEH), 305-345 (GHTG…AGAL), 349-388 (PFDK…SLIS), 392-432 (PTTS…TALF), and 454-486 (VLGE…ARGE). The disordered stretch occupies residues 249-299 (TEHQVPADPVSYLPGQGTKKRRKLEKDQEKAPIEGLTDGDATGEGGWRRAP).

The protein belongs to the WD repeat WDR12/YTM1 family. As to quaternary structure, component of the NOP7 complex, composed of ERB1, NOP7 and YTM1. The complex is held together by ERB1, which interacts with NOP7 via its N-terminal domain and with YTM1 via a high-affinity interaction between the seven-bladed beta-propeller domains of the 2 proteins. The NOP7 complex associates with the 66S pre-ribosome. Interacts (via UBL domain) with MDN1 (via VWFA/MIDAS domain).

It localises to the nucleus. The protein localises to the nucleolus. The protein resides in the nucleoplasm. Its function is as follows. Component of the NOP7 complex, which is required for maturation of the 25S and 5.8S ribosomal RNAs and formation of the 60S ribosome. In Cryptococcus neoformans var. neoformans serotype D (strain B-3501A) (Filobasidiella neoformans), this protein is Ribosome biogenesis protein YTM1.